The following is a 180-amino-acid chain: Oligoribonuclease (180 aa).

Positions 7–170 constitute an Exonuclease domain; the sequence is LIWIDLEMTG…DDIRESIAEL (164 aa). Tyr-128 is an active-site residue.

It belongs to the oligoribonuclease family.

It localises to the cytoplasm. In terms of biological role, 3'-to-5' exoribonuclease specific for small oligoribonucleotides. The sequence is that of Oligoribonuclease from Pseudomonas entomophila (strain L48).